Reading from the N-terminus, the 452-residue chain is Pup--protein ligase (452 aa).

A Mg(2+)-binding site is contributed by Glu9. Arg53 contacts ATP. Tyr55 is a Mg(2+) binding site. Catalysis depends on Asp57, which acts as the Proton acceptor. Glu63 lines the Mg(2+) pocket. ATP contacts are provided by Thr66 and Trp419.

Belongs to the Pup ligase/Pup deamidase family. Pup-conjugating enzyme subfamily.

It catalyses the reaction ATP + [prokaryotic ubiquitin-like protein]-L-glutamate + [protein]-L-lysine = ADP + phosphate + N(6)-([prokaryotic ubiquitin-like protein]-gamma-L-glutamyl)-[protein]-L-lysine.. It participates in protein degradation; proteasomal Pup-dependent pathway. It functions in the pathway protein modification; protein pupylation. Catalyzes the covalent attachment of the prokaryotic ubiquitin-like protein modifier Pup to the proteasomal substrate proteins, thereby targeting them for proteasomal degradation. This tagging system is termed pupylation. The ligation reaction involves the side-chain carboxylate of the C-terminal glutamate of Pup and the side-chain amino group of a substrate lysine. This Gordonia bronchialis (strain ATCC 25592 / DSM 43247 / BCRC 13721 / JCM 3198 / KCTC 3076 / NBRC 16047 / NCTC 10667) (Rhodococcus bronchialis) protein is Pup--protein ligase.